Consider the following 95-residue polypeptide: Turripeptide OL184 (95 aa).

In terms of processing, contains 5 disulfide bonds. In terms of tissue distribution, expressed by the venom duct.

The protein localises to the secreted. In terms of biological role, acts as a neurotoxin by inhibiting an ion channel. This chain is Turripeptide OL184, found in Iotyrris olangoensis (Sea snail).